A 436-amino-acid polypeptide reads, in one-letter code: Phosphatidylinositol transfer protein CSR1 (436 aa).

Positions 85-104 (VYDAEKVEDSDAEKEKPTPQ) are disordered. Basic and acidic residues predominate over residues 86-102 (YDAEKVEDSDAEKEKPT). A CRAL-TRIO domain is found at 188–347 (KKGIVKQLEL…ELGGKDEYNF (160 aa)).

It belongs to the PITP family. As to quaternary structure, binds phosphatidylinositol (PtdIns).

The protein resides in the cytoplasm. The protein localises to the endosome. Functionally, non-classical phosphatidylinositol (PtdIns) transfer protein (PITP), which exhibits PtdIns-binding/transfer activity in the absence of detectable PtdCho-binding/transfer activity. May also regulate post-Golgi membrane-trafficking events and have a role resistance to oxidative stress. The chain is Phosphatidylinositol transfer protein CSR1 (CSR1) from Eremothecium gossypii (strain ATCC 10895 / CBS 109.51 / FGSC 9923 / NRRL Y-1056) (Yeast).